Here is a 91-residue protein sequence, read N- to C-terminus: uncharacterized protein (91 aa).

This is an uncharacterized protein from Kluyveromyces lactis (strain ATCC 8585 / CBS 2359 / DSM 70799 / NBRC 1267 / NRRL Y-1140 / WM37) (Yeast).